We begin with the raw amino-acid sequence, 353 residues long: Basic membrane protein C (353 aa).

Positions methionine 1 to alanine 16 are cleaved as a signal peptide. Cysteine 17 carries N-palmitoyl cysteine lipidation. The S-diacylglycerol cysteine moiety is linked to residue cysteine 17.

Belongs to the BMP lipoprotein family. Monomer.

It localises to the cell inner membrane. Functionally, may be part of an ABC-type nucleoside uptake system involved in the purine salvage pathway. The protein is Basic membrane protein C (bmpC) of Borreliella burgdorferi (strain ATCC 35210 / DSM 4680 / CIP 102532 / B31) (Borrelia burgdorferi).